We begin with the raw amino-acid sequence, 75 residues long: Small ribosomal subunit protein bS18 (75 aa).

It belongs to the bacterial ribosomal protein bS18 family. As to quaternary structure, part of the 30S ribosomal subunit. Forms a tight heterodimer with protein bS6.

In terms of biological role, binds as a heterodimer with protein bS6 to the central domain of the 16S rRNA, where it helps stabilize the platform of the 30S subunit. This is Small ribosomal subunit protein bS18 from Idiomarina loihiensis (strain ATCC BAA-735 / DSM 15497 / L2-TR).